We begin with the raw amino-acid sequence, 463 residues long: tRNA dimethylallyltransferase 9 (463 aa).

Residue 57–64 (GPTGAGKS) participates in ATP binding. Substrate is bound at residue 59–64 (TGAGKS). Residues 82–85 (DSVQ) are interaction with substrate tRNA.

It belongs to the IPP transferase family. Requires Mg(2+) as cofactor. Expressed ubiquitously, with highest expression in proliferating tissues.

It localises to the cytoplasm. The enzyme catalyses adenosine(37) in tRNA + dimethylallyl diphosphate = N(6)-dimethylallyladenosine(37) in tRNA + diphosphate. In terms of biological role, catalyzes the transfer of a dimethylallyl group onto the adenine at position 37 in tRNAs that read codons beginning with uridine, leading to the formation of N6-(dimethylallyl)adenosine (i(6)A). Involved in the cis-type cytokinin biosynthesis. The chain is tRNA dimethylallyltransferase 9 (IPT9) from Arabidopsis thaliana (Mouse-ear cress).